The chain runs to 691 residues: F-box/LRR-repeat protein 5 (691 aa).

Positions 1 to 159 (MAPFPEEVDV…IKKKVIAQHC (159 aa)) are hemerythrin-like. Fe(3+) contacts are provided by histidine 15, histidine 57, glutamate 58, glutamate 61, histidine 80, histidine 126, and glutamate 130. The region spanning 202–248 (STGITHLPPEVMVSIFSYLNPQELCRCSQVSTKWSQLAKTGSLWKHL) is the F-box domain. LRR repeat units lie at residues 340–364 (SSAV…LDLT), 365–392 (QTDI…DLSG), 393–418 (CEKI…ESGL), 479–508 (VWML…CVME), 576–607 (TRLL…SLSG), 608–635 (CYQI…NLSG), and 636–661 (CLTV…YFYY). Cysteine 662, cysteine 676, cysteine 686, and cysteine 687 together coordinate [2Fe-2S] cluster.

Part of a SCF (SKP1-cullin-F-box) protein ligase complex. Interacts with ACO1/IRP1, IREB2/IRP2; the interaction depends on the [2Fe-2S] cluster. Interacts with DCTN1/p150-glued. [2Fe-2S] cluster is required as a cofactor. Post-translationally, polybiquitinated upon iron and oxygen depletion, leading to its degradation by the proteasome. Ubiquitination is regulated by the hemerythrin-like region that acts as an oxygen and iron sensor. Undergoes constitutive ubiquitin-dependent degradation at the steady state by HERC2.

Its subcellular location is the cytoplasm. It localises to the perinuclear region. The protein localises to the nucleus. Its pathway is protein modification; protein ubiquitination. With respect to regulation, an iron-sulfur cluster promotes IRP2 polyubiquitination and degradation in response to both iron and oxygen concentrations. In terms of biological role, component of some SCF (SKP1-cullin-F-box) protein ligase complex that plays a central role in iron homeostasis by promoting the ubiquitination and subsequent degradation of IREB2/IRP2. The C-terminal domain of FBXL5 contains a redox-sensitive [2Fe-2S] cluster that, upon oxidation, promotes binding to IRP2 to effect its oxygen-dependent degradation. Under iron deficiency conditions, the N-terminal hemerythrin-like (Hr) region, which contains a diiron metal center, cannot bind iron and undergoes conformational changes that destabilize the FBXL5 protein and cause its ubiquitination and degradation. When intracellular iron levels start rising, the Hr region is stabilized. Additional increases in iron levels facilitate the assembly and incorporation of a redox active [2Fe-2S] cluster in the C-terminal domain. Only when oxygen level is high enough to maintain the cluster in its oxidized state can FBXL5 recruit IRP2 as a substrate for polyubiquination and degradation. Promotes ubiquitination and subsequent degradation of the dynactin complex component DCTN1. Within the nucleus, promotes the ubiquitination of SNAI1; preventing its interaction with DNA and promoting its degradation. Negatively regulates DNA damage response by mediating the ubiquitin-proteasome degradation of the DNA repair protein NABP2. The protein is F-box/LRR-repeat protein 5 (FBXL5) of Bos taurus (Bovine).